We begin with the raw amino-acid sequence, 718 residues long: Peroxisomal bifunctional enzyme (718 aa).

Positions 1 to 280 (MAEYLRLPHS…FAEKSANKWS (280 aa)) are enoyl-CoA hydratase / isomerase. Lys38 carries the N6-succinyllysine modification. Gly99 is a substrate binding site. 2 positions are modified to N6-acetyllysine; alternate: Lys163 and Lys172. N6-succinyllysine; alternate is present on residues Lys163 and Lys172. At Lys181 the chain carries N6-succinyllysine. An N6-acetyllysine; alternate mark is found at Lys189 and Lys217. N6-succinyllysine; alternate occurs at positions 189 and 217. At Lys240 the chain carries N6-succinyllysine. Lys248 is subject to N6-acetyllysine. Position 252 is an N6-succinyllysine (Lys252). Lys274 is subject to N6-acetyllysine; alternate. Lys274 bears the N6-succinyllysine; alternate mark. Lys278, Lys288, and Lys329 each carry N6-succinyllysine. Residues 281-567 (TPSGASWKTA…DMLCEAGRFG (287 aa)) form a 3-hydroxyacyl-CoA dehydrogenase region. 4 positions are modified to N6-acetyllysine: Lys344, Lys348, Lys355, and Lys459. Residue Lys527 is modified to N6-succinyllysine. Phosphothreonine is present on Thr543. The residue at position 572 (Lys572) is an N6-succinyllysine. N6-acetyllysine; alternate occurs at positions 579, 586, and 705. 3 positions are modified to N6-succinyllysine; alternate: Lys579, Lys586, and Lys705. A Microbody targeting signal motif is present at residues 716–718 (SKL). Lys717 carries the post-translational modification N6-succinyllysine.

In the N-terminal section; belongs to the enoyl-CoA hydratase/isomerase family. This sequence in the C-terminal section; belongs to the 3-hydroxyacyl-CoA dehydrogenase family. Monomer. Post-translationally, acetylated, leading to enhanced enzyme activity. Acetylation is enhanced by up to 80% after treatment either with trichostin A (TCA) or with nicotinamide (NAM) with highest increase on Lys-344. Acetylation and enzyme activity increased by about 1.5% on addition of fatty acids.

Its subcellular location is the peroxisome. The enzyme catalyses a (3S)-3-hydroxyacyl-CoA = a (2E)-enoyl-CoA + H2O. The catalysed reaction is a 4-saturated-(3S)-3-hydroxyacyl-CoA = a (3E)-enoyl-CoA + H2O. It catalyses the reaction a (3Z)-enoyl-CoA = a 4-saturated (2E)-enoyl-CoA. It carries out the reaction a (3E)-enoyl-CoA = a 4-saturated (2E)-enoyl-CoA. The enzyme catalyses a (3S)-3-hydroxyacyl-CoA + NAD(+) = a 3-oxoacyl-CoA + NADH + H(+). The catalysed reaction is (2S,3S)-3-hydroxy-2-methylbutanoyl-CoA = (2E)-2-methylbut-2-enoyl-CoA + H2O. It catalyses the reaction (2E)-dodecenedioyl-CoA + H2O = (3S)-hydroxydodecanedioyl-CoA. It carries out the reaction (3S)-hydroxydodecanedioyl-CoA + NAD(+) = 3-oxododecanedioyl-CoA + NADH + H(+). The enzyme catalyses (2E)-octenedioyl-CoA + H2O = (3S)-hydroxyoctanedioyl-CoA. The catalysed reaction is (3S)-hydroxyoctanedioyl-CoA + NAD(+) = 3-oxooctanedioyl-CoA + NADH + H(+). It catalyses the reaction (2E)-decenedioyl-CoA + H2O = (3S)-hydroxydecanedioyl-CoA. It carries out the reaction (3S)-hydroxydecanedioyl-CoA + NAD(+) = 3-oxodecanedioyl-CoA + NADH + H(+). The enzyme catalyses (2E)-tetradecenedioyl-CoA + H2O = (3S)-hydroxytetradecanedioyl-CoA. The catalysed reaction is (3S)-hydroxytetradecanedioyl-CoA + NAD(+) = 3-oxotetradecanedioyl-CoA + NADH + H(+). It catalyses the reaction (3E,5Z)-tetradecadienoyl-CoA = (2E,5Z)-tetradecadienoyl-CoA. It carries out the reaction (3E,5Z)-octadienoyl-CoA = (2E,5Z)-octadienoyl-CoA. The enzyme catalyses (3S)-hydroxydecanoyl-CoA + NAD(+) = 3-oxodecanoyl-CoA + NADH + H(+). The catalysed reaction is (3E)-decenoyl-CoA = (2E)-decenoyl-CoA. It catalyses the reaction (3Z)-hexenoyl-CoA = (2E)-hexenoyl-CoA. It carries out the reaction (3E)-hexenoyl-CoA = (2E)-hexenoyl-CoA. The enzyme catalyses (3S)-hydroxydecanoyl-CoA = (2E)-decenoyl-CoA + H2O. The catalysed reaction is (3S)-hydroxyhexanoyl-CoA = (2E)-hexenoyl-CoA + H2O. It catalyses the reaction (3S)-hydroxyhexadecanoyl-CoA + NAD(+) = 3-oxohexadecanoyl-CoA + NADH + H(+). It carries out the reaction (3S)-hydroxyhexadecanoyl-CoA = (2E)-hexadecenoyl-CoA + H2O. The enzyme catalyses (2E)-hexadecenedioyl-CoA + H2O = (3S)-hydroxyhexadecanedioyl-CoA. The catalysed reaction is (3S)-hydroxyhexadecanedioyl-CoA + NAD(+) = 3-oxohexadecanedioyl-CoA + NADH + H(+). It functions in the pathway lipid metabolism; fatty acid beta-oxidation. Enzyme activity enhanced by acetylation. Its function is as follows. Peroxisomal trifunctional enzyme possessing 2-enoyl-CoA hydratase, 3-hydroxyacyl-CoA dehydrogenase, and delta 3, delta 2-enoyl-CoA isomerase activities. Catalyzes two of the four reactions of the long chain fatty acids peroxisomal beta-oxidation pathway. Can also use branched-chain fatty acids such as 2-methyl-2E-butenoyl-CoA as a substrate, which is hydrated into (2S,3S)-3-hydroxy-2-methylbutanoyl-CoA. Optimal isomerase for 2,5 double bonds into 3,5 form isomerization in a range of enoyl-CoA species. Also able to isomerize both 3-cis and 3-trans double bonds into the 2-trans form in a range of enoyl-CoA species. With HSD17B4, catalyzes the hydration of trans-2-enoyl-CoA and the dehydrogenation of 3-hydroxyacyl-CoA, but with opposite chiral specificity. Regulates the amount of medium-chain dicarboxylic fatty acids which are essential regulators of all fatty acid oxidation pathways. Also involved in the degradation of long-chain dicarboxylic acids through peroxisomal beta-oxidation. This Mus musculus (Mouse) protein is Peroxisomal bifunctional enzyme.